The sequence spans 80 residues: Protein Vpu (80 aa).

Residues 1–7 (MLSLQIL) are Extracellular-facing. Residues 8 to 28 (AIVALVVAAIIAIVVWSIVFI) traverse the membrane as a helical segment. The Cytoplasmic portion of the chain corresponds to 29–80 (EYRKILRQRKIDRLIDRIREREEDSGNESEGDQEELAALERGHLAPWDVDDL). Residues 49–80 (REEDSGNESEGDQEELAALERGHLAPWDVDDL) form a disordered region. Ser53 and Ser57 each carry phosphoserine; by host CK2. Residues 53–65 (SGNESEGDQEELA) are compositionally biased toward acidic residues.

Belongs to the HIV-1 VPU protein family. Homopentamer. Interacts with host CD4 and BRTC; these interactions induce proteasomal degradation of CD4. Interacts with host BST2; this interaction leads to the degradation of host BST2. Interacts with host FBXW11. Interacts with host AP1M1; this interaction plays a role in the mistrafficking and subsequent degradation of host BST2. Interacts with host RANBP2; this interaction allows Vpu to down-regulate host BLM sumoylation. Phosphorylated by host CK2. This phosphorylation is necessary for interaction with human BTRC and degradation of CD4.

The protein resides in the host membrane. With respect to regulation, ion channel activity is inhibited by hexamethylene amiloride in vitro. In terms of biological role, enhances virion budding by targeting host CD4 and Tetherin/BST2 to proteasome degradation. Degradation of CD4 prevents any unwanted premature interactions between viral Env and its host receptor CD4 in the endoplasmic reticulum. Degradation of antiretroviral protein Tetherin/BST2 is important for virion budding, as BST2 tethers new viral particles to the host cell membrane. Mechanistically, Vpu bridges either CD4 or BST2 to BTRC, a substrate recognition subunit of the Skp1/Cullin/F-box protein E3 ubiquitin ligase, induces their ubiquitination and subsequent proteasomal degradation. The alteration of the E3 ligase specificity by Vpu seems to promote the degradation of host IKBKB, leading to NF-kappa-B down-regulation and subsequent apoptosis. Acts as a viroporin that forms an oligomeric ion channel in membranes. Modulates the host DNA repair mechanisms to promote degradation of nuclear viral cDNA in cells that are already productively infected in order to suppress immune sensing and proviral hyper-integration (superinfection). Manipulates PML-NBs and modulates SUMOylation of host BLM protein thereby enhancing its DNA-end processing activity toward viral unintegrated linear DNA. Also inhibits RAD52-mediated homologous repair of viral cDNA, preventing the generation of dead-end circular forms of single copies of the long terminal repeat and permitting sustained nucleolytic attack. This is Protein Vpu from Human immunodeficiency virus type 1 group M subtype B (strain 89.6) (HIV-1).